The primary structure comprises 441 residues: MNKYQAVIIGFGKAGKTLAVTLAKAGWRVALIEQSNAMYGGTCINIGCIPTKTLVHDAQQHTDFVRAIQRKNEVVNFLRNKNFHNLADMPNIDVIDGQAEFINNHSLRVHRPEGNLEIHGEKIFINTGAQTVVPPIPGITTTPGVYDSTGLLNLKELPGHLGILGGGYIGVEFASMFANFGSKVTILEAASLFLPREDRDIADNIATILRDQGVDIILNAHVERISHHENQVQVHSEHAQLAVDALLIASGRQPATASLHPENAGIAVNERGAIVVDKRLHTTADNIWAMGDVTGGLQFTYISLDDYRIVRDELLGEGKRSTDDRKNVPYSVFMTPPLSRVGMTEEQARESGADIQVVTLPVAAIPRARVMNDTRGVLKAIVDNKTQRMLGASLLCVDSHEMINIVKMVMDAGLPYSILRDQIFTHPSMSESLNDLFSLVK.

33-43 (EQSNAMYGGTC) provides a ligand contact to FAD. Residues Cys43 and Cys48 are joined by a disulfide bond. The active-site Proton acceptor is the His426.

Belongs to the class-I pyridine nucleotide-disulfide oxidoreductase family. FAD is required as a cofactor.

Probably involved in reactive chlorine species (RCS) stress resistance. The chain is Probable pyridine nucleotide-disulfide oxidoreductase RclA (rclA) from Escherichia coli (strain K12).